A 189-amino-acid polypeptide reads, in one-letter code: Potassium-transporting ATPase KdpC subunit (189 aa).

A helical transmembrane segment spans residues P6–V26.

Belongs to the KdpC family. As to quaternary structure, the system is composed of three essential subunits: KdpA, KdpB and KdpC.

Its subcellular location is the cell inner membrane. Its function is as follows. Part of the high-affinity ATP-driven potassium transport (or Kdp) system, which catalyzes the hydrolysis of ATP coupled with the electrogenic transport of potassium into the cytoplasm. This subunit acts as a catalytic chaperone that increases the ATP-binding affinity of the ATP-hydrolyzing subunit KdpB by the formation of a transient KdpB/KdpC/ATP ternary complex. In Geotalea uraniireducens (strain Rf4) (Geobacter uraniireducens), this protein is Potassium-transporting ATPase KdpC subunit.